A 264-amino-acid chain; its full sequence is tRNA pseudouridine synthase A (264 aa).

The active-site Nucleophile is Asp-54. A substrate-binding site is contributed by Tyr-113.

The protein belongs to the tRNA pseudouridine synthase TruA family. Homodimer.

The catalysed reaction is uridine(38/39/40) in tRNA = pseudouridine(38/39/40) in tRNA. Its function is as follows. Formation of pseudouridine at positions 38, 39 and 40 in the anticodon stem and loop of transfer RNAs. The chain is tRNA pseudouridine synthase A from Leptospira biflexa serovar Patoc (strain Patoc 1 / Ames).